We begin with the raw amino-acid sequence, 329 residues long: DNA-directed RNA polymerase subunit alpha (329 aa).

The segment at 1-234 is alpha N-terminal domain (alpha-NTD); it reads MQGSVTEFLK…EQLDAFVELR (234 aa). The tract at residues 248-329 is alpha C-terminal domain (alpha-CTD); sequence FDPILLRPVD…WPPASLADDL (82 aa).

Belongs to the RNA polymerase alpha chain family. As to quaternary structure, homodimer. The RNAP catalytic core consists of 2 alpha, 1 beta, 1 beta' and 1 omega subunit. When a sigma factor is associated with the core the holoenzyme is formed, which can initiate transcription.

The enzyme catalyses RNA(n) + a ribonucleoside 5'-triphosphate = RNA(n+1) + diphosphate. DNA-dependent RNA polymerase catalyzes the transcription of DNA into RNA using the four ribonucleoside triphosphates as substrates. This is DNA-directed RNA polymerase subunit alpha from Shewanella putrefaciens (strain CN-32 / ATCC BAA-453).